A 453-amino-acid chain; its full sequence is Bifunctional protein GlmU (453 aa).

The tract at residues 1 to 226 (MVAVAILAAG…YLEITGINDR (226 aa)) is pyrophosphorylase. Residues 7-10 (LAAG), K21, Q73, and 78-79 (GT) each bind UDP-N-acetyl-alpha-D-glucosamine. D103 is a Mg(2+) binding site. 4 residues coordinate UDP-N-acetyl-alpha-D-glucosamine: G140, E155, N170, and N224. Residue N224 participates in Mg(2+) binding. The interval 227–247 (KQLAMANGILQNRVKDHWMAQ) is linker. The tract at residues 248–453 (GVTLIDPDSI…EWKKTIESKK (206 aa)) is N-acetyltransferase. UDP-N-acetyl-alpha-D-glucosamine-binding residues include R329 and K347. The active-site Proton acceptor is H359. Y362 and N373 together coordinate UDP-N-acetyl-alpha-D-glucosamine. Residues A376, 382–383 (NY), A419, and R436 contribute to the acetyl-CoA site.

The protein in the N-terminal section; belongs to the N-acetylglucosamine-1-phosphate uridyltransferase family. It in the C-terminal section; belongs to the transferase hexapeptide repeat family. Homotrimer. Mg(2+) serves as cofactor.

It is found in the cytoplasm. The enzyme catalyses alpha-D-glucosamine 1-phosphate + acetyl-CoA = N-acetyl-alpha-D-glucosamine 1-phosphate + CoA + H(+). It carries out the reaction N-acetyl-alpha-D-glucosamine 1-phosphate + UTP + H(+) = UDP-N-acetyl-alpha-D-glucosamine + diphosphate. Its pathway is nucleotide-sugar biosynthesis; UDP-N-acetyl-alpha-D-glucosamine biosynthesis; N-acetyl-alpha-D-glucosamine 1-phosphate from alpha-D-glucosamine 6-phosphate (route II): step 2/2. It participates in nucleotide-sugar biosynthesis; UDP-N-acetyl-alpha-D-glucosamine biosynthesis; UDP-N-acetyl-alpha-D-glucosamine from N-acetyl-alpha-D-glucosamine 1-phosphate: step 1/1. It functions in the pathway bacterial outer membrane biogenesis; LPS lipid A biosynthesis. In terms of biological role, catalyzes the last two sequential reactions in the de novo biosynthetic pathway for UDP-N-acetylglucosamine (UDP-GlcNAc). The C-terminal domain catalyzes the transfer of acetyl group from acetyl coenzyme A to glucosamine-1-phosphate (GlcN-1-P) to produce N-acetylglucosamine-1-phosphate (GlcNAc-1-P), which is converted into UDP-GlcNAc by the transfer of uridine 5-monophosphate (from uridine 5-triphosphate), a reaction catalyzed by the N-terminal domain. The polypeptide is Bifunctional protein GlmU (Rippkaea orientalis (strain PCC 8801 / RF-1) (Cyanothece sp. (strain PCC 8801))).